Here is a 969-residue protein sequence, read N- to C-terminus: Translation initiation factor IF-2 (969 aa).

Residues 50-370 (SFASKSAPAN…QAPSVGGVRL (321 aa)) are disordered. Over residues 54–76 (KSAPANGAKPGPAASARPGAKPT) the composition is skewed to low complexity. Residues 77–87 (PGGPRPGPRTP) are compositionally biased toward pro residues. A compositionally biased stretch (low complexity) spans 88 to 102 (APAASAPQAPAEQTA). Positions 112-124 (AVKPGPAPTPARP) are enriched in pro residues. Residues 125–164 (AAPEAPAAKAAPEAPAQRPTPGGPRPGQQQQRPGAPAQGG) are compositionally biased toward low complexity. Positions 240 to 267 (PGGPRPSPGSMPPRPNPGAMPQRTPRPG) are enriched in pro residues. Over residues 269-340 (SAGGRPGRPG…GAAGAFGRPG (72 aa)) the composition is skewed to gly residues. Positions 344 to 353 (RRGRKSKRQK) are enriched in basic residues. Residues 465 to 636 (VRPPVVTVMG…AVLLTADAAL (172 aa)) enclose the tr-type G domain. Residues 474-481 (GHVDHGKT) form a G1 region. Residue 474-481 (GHVDHGKT) coordinates GTP. The G2 stretch occupies residues 499–503 (GITQH). Residues 524–527 (DTPG) form a G3 region. GTP is bound by residues 524–528 (DTPGH) and 578–581 (NKID). The interval 578–581 (NKID) is G4. The G5 stretch occupies residues 614–616 (SAK).

This sequence belongs to the TRAFAC class translation factor GTPase superfamily. Classic translation factor GTPase family. IF-2 subfamily.

Its subcellular location is the cytoplasm. Functionally, one of the essential components for the initiation of protein synthesis. Protects formylmethionyl-tRNA from spontaneous hydrolysis and promotes its binding to the 30S ribosomal subunits. Also involved in the hydrolysis of GTP during the formation of the 70S ribosomal complex. This chain is Translation initiation factor IF-2, found in Nocardia farcinica (strain IFM 10152).